A 298-amino-acid polypeptide reads, in one-letter code: UDP-N-acetylenolpyruvoylglucosamine reductase (298 aa).

Positions 26-191 (KTGGPADWLA…LDATFALEPG (166 aa)) constitute an FAD-binding PCMH-type domain. R170 is a catalytic residue. S220 functions as the Proton donor in the catalytic mechanism. Residue E290 is part of the active site.

This sequence belongs to the MurB family. It depends on FAD as a cofactor.

Its subcellular location is the cytoplasm. It catalyses the reaction UDP-N-acetyl-alpha-D-muramate + NADP(+) = UDP-N-acetyl-3-O-(1-carboxyvinyl)-alpha-D-glucosamine + NADPH + H(+). It functions in the pathway cell wall biogenesis; peptidoglycan biosynthesis. Its function is as follows. Cell wall formation. This chain is UDP-N-acetylenolpyruvoylglucosamine reductase, found in Limosilactobacillus reuteri subsp. reuteri (strain JCM 1112) (Lactobacillus reuteri).